Reading from the N-terminus, the 145-residue chain is Large ribosomal subunit protein uL15 (145 aa).

Positions 23–51 (IGSGWGKTGGRGHKGQKSRSGGKIRKSFE) are disordered. Basic residues predominate over residues 32 to 47 (GRGHKGQKSRSGGKIR).

It belongs to the universal ribosomal protein uL15 family. In terms of assembly, part of the 50S ribosomal subunit.

Functionally, binds to the 23S rRNA. In Buchnera aphidicola subsp. Cinara cedri (strain Cc), this protein is Large ribosomal subunit protein uL15.